Here is a 403-residue protein sequence, read N- to C-terminus: Phosphoglycerate kinase (403 aa).

Residues 21 to 23, Arg-36, 59 to 62, Arg-119, and Arg-154 each bind substrate; these read DFN and HLGR. Residues Lys-207, Gly-299, Glu-330, and 357–360 each bind ATP; that span reads GGDA.

It belongs to the phosphoglycerate kinase family. As to quaternary structure, monomer.

The protein resides in the cytoplasm. The catalysed reaction is (2R)-3-phosphoglycerate + ATP = (2R)-3-phospho-glyceroyl phosphate + ADP. Its pathway is carbohydrate degradation; glycolysis; pyruvate from D-glyceraldehyde 3-phosphate: step 2/5. The chain is Phosphoglycerate kinase from Chlamydia felis (strain Fe/C-56) (Chlamydophila felis).